The primary structure comprises 618 residues: MGAIETQGFKLDDSGRRIVVDPVTRIEGHMRCEVNVDANNVIRNAVSTGTMWRGLEVILKGRDPRDAWAFVERICGVCTGCHALTSVRAVEDALGIRIPKNAHLIREMMAKTLQVHDHAVHFYHLHALDWVDVVSALKADPKKTSELQHLVSPSHPLSSPGYFPRRGRTGLKKFVESGQLGPFMNGYWGSKAYVLPPEANLMAVTHYLEALDLQKEWVKVHAIFGGKNPHPNYLVGGVPCAINLDGNGAAGRINMERLNFVKARIDEMIEFNKNVYLPDVLAIGTIYKQAGWLHGGGLSALNVADYGTYDKVAYDHATHQLPGGVILDGNWDEIHAIDPRDPEQVQEFVAHSWYQYADESKGLHPWDGVTEPKFELGARTKGTRTAIEHIDESAKYSWIKSPRWRGHAVEVGPLSRYILGYAHALKGNKYCQRVKEQVDFAAEAINHAIPKALGLPETQYTLKQLLPTTIGRTLARCLEGQYCGEMMLADYHELVANIRAGDTATANVEKWDPATWPKEAKGVGTVAAPRGMLGHWIRIKDGKIENYQCVVPTTWNGSPRDAKGQIGAFEASLLGTPMVNPEQPVEILRTLHSFDPCLACSTHVMSEDGRELTTVKVR.

Ni(2+) contacts are provided by Cys75, Cys78, Cys597, and Cys600.

The protein belongs to the [NiFe]/[NiFeSe] hydrogenase large subunit family. In terms of assembly, heterodimer of a large and a small subunit. Requires Ni(2+) as cofactor.

The protein localises to the cell membrane. It carries out the reaction H2 + A = AH2. Its function is as follows. This enzyme recycles the H(2) produced by nitrogenase to increase the production of ATP and to protect nitrogenase against inhibition or damage by O(2) under carbon- or phosphate-limited conditions. This chain is Uptake hydrogenase large subunit (hupB), found in Rubrivivax gelatinosus (Rhodocyclus gelatinosus).